Reading from the N-terminus, the 156-residue chain is ATP synthase subunit b (156 aa).

The chain crosses the membrane as a helical span at residues 12-32; that stretch reads VAFLIFVLFCMKYVWPPVITA.

Belongs to the ATPase B chain family. F-type ATPases have 2 components, F(1) - the catalytic core - and F(0) - the membrane proton channel. F(1) has five subunits: alpha(3), beta(3), gamma(1), delta(1), epsilon(1). F(0) has three main subunits: a(1), b(2) and c(10-14). The alpha and beta chains form an alternating ring which encloses part of the gamma chain. F(1) is attached to F(0) by a central stalk formed by the gamma and epsilon chains, while a peripheral stalk is formed by the delta and b chains.

The protein localises to the cell inner membrane. F(1)F(0) ATP synthase produces ATP from ADP in the presence of a proton or sodium gradient. F-type ATPases consist of two structural domains, F(1) containing the extramembraneous catalytic core and F(0) containing the membrane proton channel, linked together by a central stalk and a peripheral stalk. During catalysis, ATP synthesis in the catalytic domain of F(1) is coupled via a rotary mechanism of the central stalk subunits to proton translocation. Functionally, component of the F(0) channel, it forms part of the peripheral stalk, linking F(1) to F(0). The polypeptide is ATP synthase subunit b (Pseudomonas putida (strain ATCC 47054 / DSM 6125 / CFBP 8728 / NCIMB 11950 / KT2440)).